Consider the following 1323-residue polypeptide: PH domain leucine-rich repeat-containing protein phosphatase 2 (1323 aa).

One can recognise a PH domain in the interval Arg150–Ser248. LRR repeat units follow at residues Arg250 to Ser271, Asp273 to Tyr296, Gln300 to Ile321, Thr323 to Leu344, Asn346 to Gln368, Gln369 to Leu390, Met392 to Asn412, His416 to Lys439, His440 to Cys460, Ser461 to Phe480, Ser481 to Ser502, Leu503 to Ala524, Lys526 to Ser547, Ser549 to Ile570, Pro571 to Lys592, Asn595 to Glu616, Met621 to Leu644, His645 to Lys666, Gln669 to Cys690, Arg692 to Pro713, Gln714 to Pro735, and Thr737 to Ile758. The PPM-type phosphatase domain occupies Ser785 to Leu1033. Mn(2+) contacts are provided by Asp820, Gly821, Lys985, and Asp1024. Residues Thr1060–Gly1157 form a disordered region. Over residues Ser1071–Ala1097 the composition is skewed to low complexity. Polar residues predominate over residues Pro1122 to Gly1146. Position 1210 is a phosphoserine (Ser1210). Residues His1285–Leu1323 form a disordered region. The segment covering Lys1292–Pro1315 has biased composition (basic and acidic residues).

In terms of assembly, interacts with AKT1, AKT3 and PRKCB isoform beta-II. Interacts with STK4, RPS6KB1, RAF1. Interacts with FKBP5; FKBP5 acts as a scaffold for PHLPP2 and Akt. Interacts with NHERF1; NHERF1 scaffolds a heterotrimeric complex with PTEN. Requires Mn(2+) as cofactor. In colorectal cancer tissue, expression is highest in the surface epithelium of normal colonic mucosa adjacent to the cancer tissue but is largely excluded from the crypt bases. Expression is lost or significantly decreased in 80% of tested tumors (at protein level).

It is found in the cytoplasm. It localises to the membrane. The protein localises to the nucleus. It carries out the reaction O-phospho-L-seryl-[protein] + H2O = L-seryl-[protein] + phosphate. The catalysed reaction is O-phospho-L-threonyl-[protein] + H2O = L-threonyl-[protein] + phosphate. Its activity is regulated as follows. Inhibited by AKT1, AKT2 and AKT3. Activated by oleic acid and arachidonic acid. Protein phosphatase involved in regulation of Akt and PKC signaling. Mediates dephosphorylation in the C-terminal domain hydrophobic motif of members of the AGC Ser/Thr protein kinase family; specifically acts on 'Ser-473' of AKT1, 'Ser-660' of PRKCB isoform beta-II and 'Ser-657' of PRKCA. Akt regulates the balance between cell survival and apoptosis through a cascade that primarily alters the function of transcription factors that regulate pro- and antiapoptotic genes. Dephosphorylation of 'Ser-473' of Akt triggers apoptosis and decreases cell proliferation. Also controls the phosphorylation of AKT3. Dephosphorylates STK4 on 'Thr-387' leading to STK4 activation and apoptosis. Dephosphorylates RPS6KB1 and is involved in regulation of cap-dependent translation. Inhibits cancer cell proliferation and may act as a tumor suppressor. Dephosphorylation of PRKCA and PRKCB leads to their destabilization and degradation. Dephosphorylates RAF1 inhibiting its kinase activity. In Homo sapiens (Human), this protein is PH domain leucine-rich repeat-containing protein phosphatase 2 (PHLPP2).